The sequence spans 457 residues: Mesentericin Y105 secretion protein MesE (457 aa).

Residues 22-42 form a helical membrane-spanning segment; that stretch reads TLIIVPIFLLVVFIVLFSLFA.

It belongs to the membrane fusion protein (MFP) (TC 8.A.1) family.

The protein localises to the membrane. Its function is as follows. Involved in the secretion of mesentericin Y105. The sequence is that of Mesentericin Y105 secretion protein MesE (mesE) from Leuconostoc mesenteroides.